Reading from the N-terminus, the 394-residue chain is Phosphoglycerate kinase (394 aa).

Substrate-binding positions include 21 to 23, R36, 59 to 62, R118, and R151; these read DFN and HLGR. Position 183 is a phosphoserine (S183). 2 residues coordinate ATP: K201 and G292. T299 carries the phosphothreonine modification. ATP contacts are provided by residues E323 and 350 to 353; that span reads GGDS.

This sequence belongs to the phosphoglycerate kinase family. In terms of assembly, monomer.

It localises to the cytoplasm. It carries out the reaction (2R)-3-phosphoglycerate + ATP = (2R)-3-phospho-glyceroyl phosphate + ADP. The protein operates within carbohydrate degradation; glycolysis; pyruvate from D-glyceraldehyde 3-phosphate: step 2/5. In Bacillus thuringiensis (strain Al Hakam), this protein is Phosphoglycerate kinase.